Consider the following 456-residue polypeptide: tRNA modification GTPase MnmE (456 aa).

(6S)-5-formyl-5,6,7,8-tetrahydrofolate-binding residues include arginine 21, glutamate 85, and lysine 124. Residues 220-379 form the TrmE-type G domain; sequence QLRIVLYGEP…LLDEIQKKAA (160 aa). Asparagine 230 contacts K(+). GTP-binding positions include 230–235, 249–255, and 274–277; these read NTGKSS, SEIPGTT, and DTAG. Serine 234 is a Mg(2+) binding site. Serine 249, isoleucine 251, and threonine 254 together coordinate K(+). Threonine 255 contributes to the Mg(2+) binding site. Position 456 (lysine 456) interacts with (6S)-5-formyl-5,6,7,8-tetrahydrofolate.

It belongs to the TRAFAC class TrmE-Era-EngA-EngB-Septin-like GTPase superfamily. TrmE GTPase family. In terms of assembly, homodimer. Heterotetramer of two MnmE and two MnmG subunits. Requires K(+) as cofactor.

It is found in the cytoplasm. Functionally, exhibits a very high intrinsic GTPase hydrolysis rate. Involved in the addition of a carboxymethylaminomethyl (cmnm) group at the wobble position (U34) of certain tRNAs, forming tRNA-cmnm(5)s(2)U34. This is tRNA modification GTPase MnmE from Leptospira borgpetersenii serovar Hardjo-bovis (strain JB197).